Consider the following 588-residue polypeptide: Putative pentatricopeptide repeat-containing protein At5g52630 (588 aa).

11 PPR repeats span residues 14-48 (NYNQICDLLLSSARTRSTIKGLQLHGYVVKSGLSL), 49-79 (IPLVANNLINFYSKSQLPFDSRRAFEDSPQK), 80-114 (SSTTWSSIISCFAQNELPWMSLEFLKKMMAGNLRP), 115-149 (DDHVLPSATKSCAILSRCDIGRSVHCLSMKTGYDA), 150-180 (DVFVGSSLVDMYAKCGEIVYARKMFDEMPQR), 181-215 (NVVTWSGMMYGYAQMGENEEALWLFKEALFENLAV), 216-250 (NDYSFSSVISVCANSTLLELGRQIHGLSIKSSFDS), 251-281 (SSFVGSSLVSLYSKCGVPEGAYQVFNEVPVK), 282-316 (NLGIWNAMLKAYAQHSHTQKVIELFKRMKLSGMKP), 317-351 (NFITFLNVLNACSHAGLVDEGRYYFDQMKESRIEP), and 352-386 (TDKHYASLVDMLGRAGRLQEALEVITNMPIDPTES). Positions 387–462 (VWGALLTSCT…ETGLSWVEER (76 aa)) are type E motif. Positions 463 to 493 (NKVHTFAAGERRHEKSKEIYEKLAELGEEME) are type E(+) motif. A type DYW motif region spans residues 494–588 (KAGYIADTSY…DGKCSCNDYW (95 aa)).

It belongs to the PPR family. PCMP-H subfamily.

The protein is Putative pentatricopeptide repeat-containing protein At5g52630 (PCMP-H52) of Arabidopsis thaliana (Mouse-ear cress).